The primary structure comprises 271 residues: Putative pyruvate, phosphate dikinase regulatory protein 1 (271 aa).

156–163 (GVSRTSKT) is a binding site for ADP.

Belongs to the pyruvate, phosphate/water dikinase regulatory protein family. PDRP subfamily.

The catalysed reaction is N(tele)-phospho-L-histidyl/L-threonyl-[pyruvate, phosphate dikinase] + ADP = N(tele)-phospho-L-histidyl/O-phospho-L-threonyl-[pyruvate, phosphate dikinase] + AMP + H(+). The enzyme catalyses N(tele)-phospho-L-histidyl/O-phospho-L-threonyl-[pyruvate, phosphate dikinase] + phosphate + H(+) = N(tele)-phospho-L-histidyl/L-threonyl-[pyruvate, phosphate dikinase] + diphosphate. Bifunctional serine/threonine kinase and phosphorylase involved in the regulation of the pyruvate, phosphate dikinase (PPDK) by catalyzing its phosphorylation/dephosphorylation. In Staphylococcus saprophyticus subsp. saprophyticus (strain ATCC 15305 / DSM 20229 / NCIMB 8711 / NCTC 7292 / S-41), this protein is Putative pyruvate, phosphate dikinase regulatory protein 1.